A 279-amino-acid polypeptide reads, in one-letter code: Undecaprenyl-diphosphatase (279 aa).

A run of 8 helical transmembrane segments spans residues 2–22, 44–64, 85–105, 113–133, 163–183, 188–208, 223–243, and 255–275; these read LIIE…TEWL, AFIE…VMLI, WQLW…AVPL, FYFM…FIWI, VLSI…AIIL, TVAA…YSGL, AQVL…LLAI, and FTIF…YSFF.

Belongs to the UppP family.

It is found in the cell membrane. It carries out the reaction di-trans,octa-cis-undecaprenyl diphosphate + H2O = di-trans,octa-cis-undecaprenyl phosphate + phosphate + H(+). Its function is as follows. Catalyzes the dephosphorylation of undecaprenyl diphosphate (UPP). Confers resistance to bacitracin. The chain is Undecaprenyl-diphosphatase from Streptococcus pyogenes serotype M2 (strain MGAS10270).